Here is a 272-residue protein sequence, read N- to C-terminus: Dermonecrotic toxin LvSicTox-alphaIC1biii (272 aa).

Histidine 5 is an active-site residue. Residues glutamate 25 and aspartate 27 each coordinate Mg(2+). Histidine 41 serves as the catalytic Nucleophile. Cystine bridges form between cysteine 45–cysteine 51 and cysteine 47–cysteine 189. Aspartate 84 contributes to the Mg(2+) binding site.

The protein belongs to the arthropod phospholipase D family. Class II subfamily. The cofactor is Mg(2+). As to expression, expressed by the venom gland.

The protein resides in the secreted. The enzyme catalyses an N-(acyl)-sphingosylphosphocholine = an N-(acyl)-sphingosyl-1,3-cyclic phosphate + choline. It catalyses the reaction an N-(acyl)-sphingosylphosphoethanolamine = an N-(acyl)-sphingosyl-1,3-cyclic phosphate + ethanolamine. The catalysed reaction is a 1-acyl-sn-glycero-3-phosphocholine = a 1-acyl-sn-glycero-2,3-cyclic phosphate + choline. It carries out the reaction a 1-acyl-sn-glycero-3-phosphoethanolamine = a 1-acyl-sn-glycero-2,3-cyclic phosphate + ethanolamine. Functionally, dermonecrotic toxins cleave the phosphodiester linkage between the phosphate and headgroup of certain phospholipids (sphingolipid and lysolipid substrates), forming an alcohol (often choline) and a cyclic phosphate. This toxin acts on sphingomyelin (SM). It may also act on ceramide phosphoethanolamine (CPE), lysophosphatidylcholine (LPC) and lysophosphatidylethanolamine (LPE), but not on lysophosphatidylserine (LPS), and lysophosphatidylglycerol (LPG). It acts by transphosphatidylation, releasing exclusively cyclic phosphate products as second products. Induces dermonecrosis, hemolysis, increased vascular permeability, edema, inflammatory response, and platelet aggregation. This Loxosceles variegata (Recluse spider) protein is Dermonecrotic toxin LvSicTox-alphaIC1biii.